The following is a 174-amino-acid chain: UPF0340 protein SH0921 (174 aa).

It belongs to the UPF0340 family.

In Staphylococcus haemolyticus (strain JCSC1435), this protein is UPF0340 protein SH0921.